The sequence spans 1494 residues: Neuropathy target esterase sws (1494 aa).

The Lumenal portion of the chain corresponds to 1-35; it reads MDVLELLRVSGSNMYYSTFLADAWCYYISNQITMT. The chain crosses the membrane as a helical span at residues 36-56; sequence MYLYCALGVLSMLFIGWFVYF. Topologically, residues 57–1494 are cytoplasmic; it reads KRLARLRLRH…NTNNETKNYL (1438 aa). 176 to 303 is a binding site for a nucleoside 3',5'-cyclic phosphate; sequence IFGHFEKPIF…IRVIQVIMIR (128 aa). Residues 362-372 show a composition bias toward low complexity; it reads ASGTAGSTHTA. 2 disordered regions span residues 362–405 and 422–452; these read ASGT…ELSG and NSYP…QPEV. A compositionally biased stretch (polar residues) spans 435-449; the sequence is GNLSTRRGSITQQEQ. Phosphoserine is present on S443. A nucleoside 3',5'-cyclic phosphate contacts are provided by residues 474-601 and 590-717; these read ELGL…VVRR and IVLD…LSHR. The PNPLA domain maps to 944–1110; it reads LVLGGGGARG…VNNLPGHLWR (167 aa). A GXGXXG motif is present at residues 948-953; that stretch reads GGGARG. Positions 975-979 match the GXSXG motif; that stretch reads GVSIG. S977 (nucleophile) is an active-site residue. D1097 serves as the catalytic Proton acceptor. The short motif at 1097–1099 is the DGA/G element; sequence DGG. The tract at residues 1367 to 1494 is disordered; that stretch reads MDKATQSTPP…NTNNETKNYL (128 aa). The span at 1370 to 1381 shows a compositional bias: polar residues; it reads ATQSTPPLQSKA. Composition is skewed to basic and acidic residues over residues 1389-1420 and 1452-1483; these read SKEE…RELS and MDKK…KENR. A compositionally biased stretch (polar residues) spans 1484-1494; the sequence is SNTNNETKNYL.

This sequence belongs to the NTE family. In terms of assembly, interacts with Pka-C3; interaction inhibits the catalytic function of Pka-C3 and the esterase activity of sws.

Its subcellular location is the endoplasmic reticulum membrane. It carries out the reaction a 1-acyl-sn-glycero-3-phosphocholine + H2O = sn-glycerol 3-phosphocholine + a fatty acid + H(+). Functionally, phospholipase B that deacylates intracellular phosphatidylcholine (PtdCho), generating glycerophosphocholine (GroPtdCho). This deacylation occurs at both sn-2 and sn-1 positions of PtdCho. Its specific chemical modification by certain organophosphorus (OP) compounds leads to distal axonopathy. Plays a role in the signaling mechanism between neurons and glia that regulates glia wrapping during development of the adult brain. Essential for membrane lipid homeostasis and cell survival in both neurons and glia of the adult brain. The protein is Neuropathy target esterase sws of Drosophila pseudoobscura pseudoobscura (Fruit fly).